Consider the following 621-residue polypeptide: Probable potassium transport system protein Kup 2 (621 aa).

Helical transmembrane passes span 12–32 (ITVA…LYAL), 52–72 (VLSL…VAII), 101–121 (WIIT…SMIT), 138–158 (PDLK…LFFI), 166–186 (VGKL…ILGL), 213–233 (GLAF…EALY), 249–269 (FGFV…LLLI), 286–306 (ALIP…QAVI), 338–358 (IYVP…VIGF), 370–390 (IAVT…MVLM), 396–416 (LLVA…FAAN), and 420–440 (IPEG…VLTT).

Belongs to the HAK/KUP transporter (TC 2.A.72) family.

It is found in the cell inner membrane. It carries out the reaction K(+)(in) + H(+)(in) = K(+)(out) + H(+)(out). Functionally, transport of potassium into the cell. Likely operates as a K(+):H(+) symporter. This chain is Probable potassium transport system protein Kup 2, found in Dechloromonas aromatica (strain RCB).